The chain runs to 255 residues: Flagellar brake protein YcgR (255 aa).

The 116-residue stretch at 130-245 (QRREHFRVPL…MAAHLQRFVM (116 aa)) folds into the PilZ domain.

This sequence belongs to the YcgR family. As to quaternary structure, monomer. Interacts with the flagellar basal bodies.

The protein localises to the bacterial flagellum basal body. Its function is as follows. Acts as a flagellar brake, regulating swimming and swarming in a bis-(3'-5') cyclic diguanylic acid (c-di-GMP)-dependent manner. Binds 1 c-di-GMP dimer per subunit. Increasing levels of c-di-GMP lead to decreased motility. The chain is Flagellar brake protein YcgR from Thiobacillus denitrificans (strain ATCC 25259 / T1).